Reading from the N-terminus, the 79-residue chain is Conotoxin ArMSGL-0123 (79 aa).

A signal peptide spans 1-20 (MSRLGIMVLTLLLLVFIVTS). The propeptide occupies 21–44 (HQDAGEKQATKRAAVNFRWRRSFT). 3 disulfides stabilise this stretch: cysteine 52-cysteine 64, cysteine 56-cysteine 73, and cysteine 63-cysteine 77. Leucine 78 is subject to Leucine amide.

The protein belongs to the conotoxin O3 superfamily. In terms of tissue distribution, expressed by the venom duct.

It localises to the secreted. In Conus arenatus (Sand-dusted cone), this protein is Conotoxin ArMSGL-0123.